Consider the following 393-residue polypeptide: Protein TsgA (393 aa).

12 helical membrane passes run 11-31, 51-71, 78-98, 101-121, 134-154, 162-182, 206-226, 245-265, 273-293, 297-317, 332-352, and 361-381; these read WISF…GMVM, FLNA…EIVP, FGFL…SLAL, AAMF…TFLI, LLFT…IAAF, WYWV…LTFG, IGVL…LGFI, TLVS…SFIL, ILTV…TGTP, AWSI…IITL, FVLT…GPIV, and LLTA…LGFV.

This sequence belongs to the major facilitator superfamily. TsgA family.

The protein localises to the cell inner membrane. In Escherichia coli O7:K1 (strain IAI39 / ExPEC), this protein is Protein TsgA.